Here is a 503-residue protein sequence, read N- to C-terminus: 2-isopropylmalate synthase (503 aa).

Mn(2+)-binding residues include aspartate 1, histidine 189, histidine 191, and asparagine 225. Residues 1–254 form the Pyruvate carboxyltransferase domain; that stretch reads DGEQALQASL…STNINHKEIY (254 aa). Residues 379–503 form a regulatory domain region; that stretch reads SLKFFSVQSI…NKNLKNLKKQ (125 aa).

Belongs to the alpha-IPM synthase/homocitrate synthase family. LeuA type 1 subfamily. In terms of assembly, homodimer. The cofactor is Mn(2+).

The protein localises to the cytoplasm. It carries out the reaction 3-methyl-2-oxobutanoate + acetyl-CoA + H2O = (2S)-2-isopropylmalate + CoA + H(+). Its pathway is amino-acid biosynthesis; L-leucine biosynthesis; L-leucine from 3-methyl-2-oxobutanoate: step 1/4. Catalyzes the condensation of the acetyl group of acetyl-CoA with 3-methyl-2-oxobutanoate (2-ketoisovalerate) to form 3-carboxy-3-hydroxy-4-methylpentanoate (2-isopropylmalate). This is 2-isopropylmalate synthase from Buchnera aphidicola subsp. Uroleucon ambrosiae.